We begin with the raw amino-acid sequence, 1034 residues long: AP-3 complex subunit delta (1034 aa).

10 HEAT repeats span residues 35 to 72, 143 to 180, 181 to 217, 219 to 255, 258 to 297, 299 to 337, 338 to 374, 376 to 414, 415 to 452, and 570 to 609; these read KYIS…LGYD, DLSR…RYPE, ALRP…KNPK, YLPL…LEPR, KKLI…GMPN, SASI…THPK, SVQA…KKNL, EIVK…LYVT, NFEW…RVPV, and NSAC…EIVQ. 4 disordered regions span residues 637–660, 669–688, 701–723, and 758–1034; these read DLDE…EHDK, QAGT…ELTP, EQSN…NADQ, and QEQQ…KEIL. Serine 683 carries the post-translational modification Phosphoserine. Threonine 687 is modified (phosphothreonine). The segment covering 769–784 has biased composition (basic residues); it reads GKKKHKKGKKSKKAKN. Basic and acidic residues-rich tracts occupy residues 822-836 and 882-906; these read KDGK…RALD and KDKD…RKEA. Positions 928 to 942 are enriched in low complexity; it reads SATSNNNNTSTVLPD. The span at 986–1003 shows a compositional bias: basic residues; sequence KVHKKKHKKEKSQRKEKK. Residues 1007-1016 show a composition bias toward low complexity; it reads ESASVSAIVS. A compositionally biased stretch (polar residues) spans 1025-1034; the sequence is GISTPSKEIL.

It belongs to the adaptor complexes large subunit family. As to quaternary structure, adaptor protein complex 3 (AP-3) is a heterotetramer composed of two large chains (delta and beta3), a medium chain (mu3) and a small chain (sigma3).

The protein localises to the cytoplasmic vesicle. The protein resides in the clathrin-coated vesicle membrane. It localises to the golgi apparatus. Functionally, part of the AP-3 complex, an adapter-related complex which is not clathrin-associated. The complex is associated with the Golgi region as well as more peripheral structures. It facilitates the budding of vesicles from the Golgi membrane and may be directly involved in trafficking to lysosomes. Its function is as follows. May be a coat protein involved in the formation of specialized structures like pigment granules. In Drosophila melanogaster (Fruit fly), this protein is AP-3 complex subunit delta (g).